Reading from the N-terminus, the 1019-residue chain is Photoactivated adenylate cyclase subunit alpha-like protein 1224-5/1F (1019 aa).

The 94-residue stretch at 55 to 148 (LRRLMYLSAS…GRMYGWWHLK (94 aa)) folds into the BLUF 1 domain. The 129-residue stretch at 204–332 (VVTVIYLVEF…DWINSASRIT (129 aa)) folds into the Guanylate cyclase 1 domain. One can recognise a BLUF 2 domain in the interval 467–559 (LITLTYISQA…GVYGSPLDMT (93 aa)). The 130-residue stretch at 615 to 744 (VMLATAISSF…EVRARVLEVE (130 aa)) folds into the Guanylate cyclase 2 domain. The disordered stretch occupies residues 825–863 (NISCRGGNPPAGGIPTSPKVRPPGRTNSVSSYTPDPKQA).

Belongs to the adenylyl cyclase class-4/guanylyl cyclase family. As to quaternary structure, heterotetramer of two alpha and two beta subunits.

It localises to the cell projection. Its subcellular location is the cilium. The protein localises to the flagellum. This is Photoactivated adenylate cyclase subunit alpha-like protein 1224-5/1F from Euglena gracilis.